Consider the following 874-residue polypeptide: Leucine--tRNA ligase (874 aa).

The 'HIGH' region signature appears at 47–57; sequence PYPSGKLHMGH. The short motif at 636-640 is the 'KMSKS' region element; it reads KMSKS. Lysine 639 serves as a coordination point for ATP.

Belongs to the class-I aminoacyl-tRNA synthetase family.

It is found in the cytoplasm. It catalyses the reaction tRNA(Leu) + L-leucine + ATP = L-leucyl-tRNA(Leu) + AMP + diphosphate. The polypeptide is Leucine--tRNA ligase (Acinetobacter baumannii (strain SDF)).